A 435-amino-acid chain; its full sequence is ATP-dependent protease ATPase subunit HslU (435 aa).

Residues valine 18, 60–65 (GVGKTE), aspartate 248, glutamate 313, and arginine 385 each bind ATP.

The protein belongs to the ClpX chaperone family. HslU subfamily. As to quaternary structure, a double ring-shaped homohexamer of HslV is capped on each side by a ring-shaped HslU homohexamer. The assembly of the HslU/HslV complex is dependent on binding of ATP.

Its subcellular location is the cytoplasm. Functionally, ATPase subunit of a proteasome-like degradation complex; this subunit has chaperone activity. The binding of ATP and its subsequent hydrolysis by HslU are essential for unfolding of protein substrates subsequently hydrolyzed by HslV. HslU recognizes the N-terminal part of its protein substrates and unfolds these before they are guided to HslV for hydrolysis. This chain is ATP-dependent protease ATPase subunit HslU, found in Rhodospirillum rubrum (strain ATCC 11170 / ATH 1.1.1 / DSM 467 / LMG 4362 / NCIMB 8255 / S1).